The sequence spans 591 residues: 2-succinyl-5-enolpyruvyl-6-hydroxy-3-cyclohexene-1-carboxylate synthase (591 aa).

Belongs to the TPP enzyme family. MenD subfamily. In terms of assembly, homodimer. It depends on Mg(2+) as a cofactor. The cofactor is Mn(2+). Requires thiamine diphosphate as cofactor.

The enzyme catalyses isochorismate + 2-oxoglutarate + H(+) = 5-enolpyruvoyl-6-hydroxy-2-succinyl-cyclohex-3-ene-1-carboxylate + CO2. Its pathway is quinol/quinone metabolism; 1,4-dihydroxy-2-naphthoate biosynthesis; 1,4-dihydroxy-2-naphthoate from chorismate: step 2/7. It participates in cofactor biosynthesis; phylloquinone biosynthesis. Its function is as follows. Catalyzes the thiamine diphosphate-dependent decarboxylation of 2-oxoglutarate and the subsequent addition of the resulting succinic semialdehyde-thiamine pyrophosphate anion to isochorismate to yield 2-succinyl-5-enolpyruvyl-6-hydroxy-3-cyclohexene-1-carboxylate (SEPHCHC). In Rippkaea orientalis (strain PCC 8801 / RF-1) (Cyanothece sp. (strain PCC 8801)), this protein is 2-succinyl-5-enolpyruvyl-6-hydroxy-3-cyclohexene-1-carboxylate synthase.